Reading from the N-terminus, the 475-residue chain is Secreted triacylglycerol lipase LIP5 (475 aa).

Residues M1–G19 form the signal peptide. A disulfide bridge links C129 with C300. The active-site Nucleophile is the S213. N-linked (GlcNAc...) asparagine glycans are attached at residues N246 and N312. The active site involves D360. The N-linked (GlcNAc...) asparagine glycan is linked to N369. H394 is an active-site residue. A glycan (N-linked (GlcNAc...) asparagine) is linked at N471.

This sequence belongs to the AB hydrolase superfamily. Lipase family. Class Lip subfamily.

It catalyses the reaction a triacylglycerol + H2O = a diacylglycerol + a fatty acid + H(+). The catalysed reaction is a monoacylglycerol + H2O = glycerol + a fatty acid + H(+). The enzyme catalyses a diacylglycerol + H2O = a monoacylglycerol + a fatty acid + H(+). In terms of biological role, secreted lipase involved in Dandruff and seborrheic dermatitis (D/SD) probably via lipase-mediated breakdown of sebaceous lipids and release of irritating free fatty acids. Has triacylglycerol lipase activity and is able to hydrolyze triolein. Mostly converts monoolein to di- and triolein, while free fatty acids are only produced in low amounts. The chain is Secreted triacylglycerol lipase LIP5 from Malassezia globosa (strain ATCC MYA-4612 / CBS 7966) (Dandruff-associated fungus).